The sequence spans 758 residues: General transcription and DNA repair factor IIH helicase subunit XPD (758 aa).

Positions D7–Y285 constitute a Helicase ATP-binding domain. Residue M42–T49 participates in ATP binding. The [4Fe-4S] cluster site is built by C116, C134, C155, and C190. A DEAH box motif is present at residues D234–N238.

The protein belongs to the helicase family. RAD3/XPD subfamily. As to quaternary structure, component of the 7-subunit TFIIH core complex composed of XPB, XPD, TFB1/GTF2H1, GTF2H2/P44, TFB4/GTF2H3, TFB2/GTF2H4 and TFB5/GTF2H5, which is active in NER. The core complex associates with the 3-subunit CDK-activating kinase (CAK) module composed of CYCH1/cyclin H1, CDKD and MAT1/At4g30820 to form the 10-subunit holoenzyme (holo-TFIIH) active in transcription. Interacts with GTF2H2/p44. [4Fe-4S] cluster serves as cofactor. As to expression, expressed at low levels in all tissues.

The protein localises to the nucleus. It carries out the reaction Couples ATP hydrolysis with the unwinding of duplex DNA at the replication fork by translocating in the 5'-3' direction. This creates two antiparallel DNA single strands (ssDNA). The leading ssDNA polymer is the template for DNA polymerase III holoenzyme which synthesizes a continuous strand.. The catalysed reaction is ATP + H2O = ADP + phosphate + H(+). In terms of biological role, ATP-dependent 5'-3' DNA helicase, component of the general transcription and DNA repair factor IIH (TFIIH) core complex, which is involved in general and transcription-coupled nucleotide excision repair (NER) of damaged DNA and, when complexed to CDK-activating kinase (CAK), involved in transcription by RNA polymerase II. In NER, TFIIH acts by opening DNA around the lesion to allow the excision of the damaged oligonucleotide and its replacement by a new DNA fragment. The ATP-dependent helicase activity of XPD is required for DNA opening. In transcription, TFIIH has an essential role in transcription initiation. When the pre-initiation complex (PIC) has been established, TFIIH is required for promoter opening and promoter escape. Phosphorylation of the C-terminal tail (CTD) of the largest subunit of RNA polymerase II by the kinase module CAK controls the initiation of transcription. XPD acts by forming a bridge between CAK and the core-TFIIH complex. Essential during plant growth. May negatively regulate a common response program mediated by UV damage and heat stress, that leads to tissue death and reduced chloroplast function. The polypeptide is General transcription and DNA repair factor IIH helicase subunit XPD (Arabidopsis thaliana (Mouse-ear cress)).